Reading from the N-terminus, the 365-residue chain is Transcription factor KUA1 (365 aa).

A disordered region spans residues Met-1–Arg-21. The CCHC-type zinc-finger motif lies at Arg-3–Asn-20. A compositionally biased stretch (polar residues) spans Cys-8–Cys-18. The R/KLFGV (transcriptional repression) signature appears at Lys-24–Val-28. A disordered region spans residues Met-41–Thr-99. One can recognise an HTH myb-type domain in the interval Arg-90 to Ser-146. A DNA-binding region (H-T-H motif) is located at residues Trp-118–Phe-142. 2 disordered regions span residues Ser-214–Leu-254 and Glu-321–Leu-365. The segment covering Ser-220–Leu-254 has biased composition (low complexity). The span at Arg-343–Ser-355 shows a compositional bias: polar residues.

Expressed ubiquitously, except in hypocotyls, root tips and lateral root primordia.

It is found in the nucleus. Transcriptional repressor. Direct regulator of the transcription of peroxidase (Prxs) and reactive oxygen species (ROS)-related genes via the recognition of 5'-ATCACA-3' motif. Binds to 5'-TATCCA-3' motif (TA box) and represses the activity of corresponding promoters (e.g. sugar response genes). Regulates hypocotyl elongation in response to darkness by enhancing auxin accumulation in a phytochrome-interacting factor (PIF) proteins-dependent manner. Promotes lateral roots formation. Promotes cell expansion during leaves development via the modulation of cell wall-located Prxs. Plays a critical role in developmentally regulated and dark-induced onset of leaf senescence by repressing the transcription of several genes involved in chloroplast function and responses to light and auxin. Promotes responses to auxin, abscisic acid (ABA), and ethylene. This Arabidopsis thaliana (Mouse-ear cress) protein is Transcription factor KUA1.